The primary structure comprises 83 residues: U-actitoxin-Aeq6a (83 aa).

The first 20 residues, 1–20 (MIYKAVFVCLVLVLLGDVFC), serve as a signal peptide directing secretion. The propeptide occupies 21 to 36 (SPRNSGGGTLNDNPFE). Residue Pro-82 is modified to Proline amide.

Contains 3 disulfide bonds. In terms of tissue distribution, expressed by acrorhagi.

The protein resides in the secreted. Its subcellular location is the nematocyst. Its function is as follows. Toxin. In Actinia equina (Beadlet anemone), this protein is U-actitoxin-Aeq6a.